The chain runs to 335 residues: Phosphate acyltransferase (335 aa).

It belongs to the PlsX family. In terms of assembly, homodimer. Probably interacts with PlsY.

The protein localises to the cytoplasm. The enzyme catalyses a fatty acyl-[ACP] + phosphate = an acyl phosphate + holo-[ACP]. The protein operates within lipid metabolism; phospholipid metabolism. In terms of biological role, catalyzes the reversible formation of acyl-phosphate (acyl-PO(4)) from acyl-[acyl-carrier-protein] (acyl-ACP). This enzyme utilizes acyl-ACP as fatty acyl donor, but not acyl-CoA. This chain is Phosphate acyltransferase, found in Streptococcus uberis (strain ATCC BAA-854 / 0140J).